Reading from the N-terminus, the 298-residue chain is Cyclic dof factor 1 (298 aa).

The segment at 27–46 (EEEEKNQNKTLTDQSEKDKT) is disordered. The Dof-type zinc-finger motif lies at 54–108 (LPCPRCNSMETKFCYYNNYNVNQPRHFCKACQRYWTSGGTMRSVPIGAGRRKNKN). Positions 56, 59, 81, and 84 each coordinate Zn(2+). The interval 200 to 231 (SSSPTSTLGKHSRDEDETVKQKQRNGSVLVPK) is disordered. Residues 210–219 (HSRDEDETVK) are compositionally biased toward basic and acidic residues.

As to quaternary structure, interacts with ADO2 (via kelch repeats), ADO3 (via kelch repeats) and GI (via N-terminus). Ubiquitinated. Expressed in the vascular tissues of cotyledons, leaves and hypocotyls and in stomata. Not detected in roots.

The protein resides in the nucleus. In terms of biological role, transcription factor that binds specifically to a 5'-AA[AG]G-3' consensus core sequence. A flanking TGT sequence contributes to the specificity of binding. Regulates a photoperiodic flowering response. Transcriptional repressor of 'CONSTANS' expression. The DNA-binding ability is not modulated by 'GIGANTEA' but the stability of CDF1 is controlled by the proteasome-dependent pathway. Ubiquitinated by the SCF(ADO3) E3 ubiquitin ligase complex. Binds to the FT promoter in the morning. The polypeptide is Cyclic dof factor 1 (CDF1) (Arabidopsis thaliana (Mouse-ear cress)).